The chain runs to 620 residues: Membrane protein insertase YidC (620 aa).

A helical transmembrane segment spans residues 7–27 (NYLIAIALSVMVVLGWQFFYM). The span at 37 to 58 (AEQAQQAQQAKTPATQATPGAA) shows a compositional bias: low complexity. Positions 37 to 77 (AEQAQQAQQAKTPATQATPGAAVNGALPGQTQASATTSRED) are disordered. Transmembrane regions (helical) follow at residues 399–419 (FGVAILLTTIAVKLLFFPLAS), 469–489 (WPLLLQIPVFFALYKVIYITI), 514–534 (LFGLLPFESPAMLHLGIWPII), and 560–580 (WMPLVFTFMLGSFPAGLVIYW).

This sequence belongs to the OXA1/ALB3/YidC family. Type 1 subfamily. Interacts with the Sec translocase complex via SecD. Specifically interacts with transmembrane segments of nascent integral membrane proteins during membrane integration.

The protein localises to the cell inner membrane. Required for the insertion and/or proper folding and/or complex formation of integral membrane proteins into the membrane. Involved in integration of membrane proteins that insert both dependently and independently of the Sec translocase complex, as well as at least some lipoproteins. Aids folding of multispanning membrane proteins. This is Membrane protein insertase YidC from Allorhizobium ampelinum (strain ATCC BAA-846 / DSM 112012 / S4) (Agrobacterium vitis (strain S4)).